A 451-amino-acid chain; its full sequence is 23S rRNA (uracil(1939)-C(5))-methyltransferase RlmD (451 aa).

A disordered region spans residues Met1–Ile21. Residues Gln20–Arg78 enclose the TRAM domain. Residues Cys91, Cys97, Cys100, and Cys179 each coordinate [4Fe-4S] cluster. Gln283, Phe312, Asn317, Glu333, Asp360, and Asp381 together coordinate S-adenosyl-L-methionine. Cys407 (nucleophile) is an active-site residue.

It belongs to the class I-like SAM-binding methyltransferase superfamily. RNA M5U methyltransferase family. RlmD subfamily.

It catalyses the reaction uridine(1939) in 23S rRNA + S-adenosyl-L-methionine = 5-methyluridine(1939) in 23S rRNA + S-adenosyl-L-homocysteine + H(+). Functionally, catalyzes the formation of 5-methyl-uridine at position 1939 (m5U1939) in 23S rRNA. The polypeptide is 23S rRNA (uracil(1939)-C(5))-methyltransferase RlmD (Pseudomonas syringae pv. tomato (strain ATCC BAA-871 / DC3000)).